The following is a 235-amino-acid chain: Large ribosomal subunit protein uL1 (235 aa).

Belongs to the universal ribosomal protein uL1 family. Part of the 50S ribosomal subunit.

Functionally, binds directly to 23S rRNA. The L1 stalk is quite mobile in the ribosome, and is involved in E site tRNA release. Protein L1 is also a translational repressor protein, it controls the translation of the L11 operon by binding to its mRNA. The protein is Large ribosomal subunit protein uL1 of Desulfotalea psychrophila (strain LSv54 / DSM 12343).